The primary structure comprises 548 residues: Probable nuclear hormone receptor HR3 (548 aa).

The disordered stretch occupies residues 1-27; sequence MNNNQFHELFGSQWPPDQHGGHSSAST. The segment at residues 101–176 is a DNA-binding region (nuclear receptor); sequence IIPCKVCGDK…LGMSRDAVKF (76 aa). 2 NR C4-type zinc fingers span residues 104–124 and 140–164; these read CKVCGDKSSGVHYGVITCEGC and CPRNKACVVDRVNRNRCQYCRLQKC. Residues 198–228 form a disordered region; it reads MRAQNDAAPDSVYDAQQQTPSSSDQFHGHYN. Residues 211-222 are compositionally biased toward polar residues; that stretch reads DAQQQTPSSSDQ. Positions 295-539 constitute an NR LBD domain; that stretch reads ISKVLVKSLA…PALYKELFSL (245 aa).

Belongs to the nuclear hormone receptor family. NR1 subfamily.

It localises to the nucleus. Its function is as follows. Putative receptor whose ligand is not yet known. The protein is Probable nuclear hormone receptor HR3 (HR3) of Manduca sexta (Tobacco hawkmoth).